Here is a 328-residue protein sequence, read N- to C-terminus: CCAAT/enhancer-binding protein beta (328 aa).

Position 3 is an asymmetric dimethylarginine; by CARM1 (arginine 3). At lysine 39 the chain carries N6-methylated lysine. The segment at 165–274 (DSCKGPRKEE…NIAVRKSRDK (110 aa)) is disordered. The span at 200 to 231 (SVPSGSSGNLSTSSSSSPPGTPNPSESSKSAA) shows a compositional bias: low complexity. Threonine 220 bears the Phosphothreonine; by RPS6KA1, CDK2 and MAPK mark. Residues 248–264 (KCVDKHSDEYKLRRERN) show a composition bias toward basic and acidic residues. A bZIP domain is found at 254-317 (SDEYKLRRER…STLRNLFKQL (64 aa)). Residues 258-278 (KLRRERNNIAVRKSRDKAKMR) form a basic motif region. Positions 280 to 287 (LETQHKVL) are leucine-zipper.

This sequence belongs to the bZIP family. C/EBP subfamily. In terms of assembly, binds DNA as a dimer. Interacts (not methylated) with MED23, MED26, SMARCA2, SMARCB1 and SMARCC1. Methylated. Methylation at Arg-3 by CARM1 and at Lys-39 by EHMT2, inhibit transactivation activity. Methylation is probably inhibited by phosphorylation at Thr-220. Specifically expressed in myelomoncytic cells.

The protein localises to the nucleus. In terms of biological role, important transcriptional activator regulating the expression of genes involved in immune and inflammatory responses. Binds to regulatory regions of several acute-phase and cytokines genes and probably plays a role in the regulation of acute-phase reaction, inflammation and hemopoiesis. The consensus recognition site is 5'-T[TG]NNGNAA[TG]-3'. Functions in brown adipose tissue (BAT) differentiation. Regulates the transcriptional induction of peroxisome proliferator-activated receptor gamma (PPARG). Binds to the MGF and MIM-1 promoters and activates the transcription of these genes. Important transcription factor regulating the expression of genes involved in immune and inflammatory responses. Also plays a significant role in adipogenesis, as well as in the gluconeogenic pathway, liver regeneration, and hematopoiesis. The consensus recognition site is 5'-T[TG]NNGNAA[TG]-3'. Its functional capacity is governed by protein interactions and post-translational protein modifications. This is CCAAT/enhancer-binding protein beta (CEBPB) from Gallus gallus (Chicken).